A 677-amino-acid chain; its full sequence is Pannexin-2 (677 aa).

The Cytoplasmic segment spans residues 11–47 (MATALLAGEKLRELILPGAQDDKAGALAALLLQLKLE). A helical membrane pass occupies residues 48-70 (LPFDRVVTIGTVLVPILLVTLVF). Topologically, residues 71–123 (TKNFAEEPIYCYTPHNFTRDQALYARGYCWTELRDALPGVDASLWPSLFEHKF) are extracellular. A glycan (N-linked (GlcNAc...) asparagine) is linked at Asn-86. A helical membrane pass occupies residues 124–146 (LPYALLAFAAIMYVPALGWEFLA). Residues 147-226 (STRLTSELNF…RGRSNFLAKL (80 aa)) lie on the Cytoplasmic side of the membrane. A helical transmembrane segment spans residues 227–249 (YLARHVLILLLSAVPISYLCTYY). Residues 250–292 (ATQKQNEFTCALGASPDGAAGAGPAVRVSCKLPSVQLQRIIAG) are Extracellular-facing. Residues 293 to 315 (VDIVLLCVMNLIILVNLIHLFIF) traverse the membrane as a helical segment. At 316-643 (RKSNFIFDKL…AREEEDGGPR (328 aa)) the chain is on the cytoplasmic side. 2 disordered regions span residues 393–423 (ATPTVRDSGVQTVDPSANPAEPDGAAEPPVV) and 454–510 (NSKA…KKHA). Positions 492 to 504 (GPGPAPAPAPPPA) are enriched in pro residues. A Phosphoserine modification is found at Ser-593.

This sequence belongs to the pannexin family. As to quaternary structure, homoheptameric. S-palmitoylated in neural stem and progenitor cells. Post-translationally, cleaved by CASP3 and CASP7 during apoptosis. Cleavage has no effect on it function.

It localises to the cell membrane. Its subcellular location is the golgi apparatus membrane. The protein resides in the endoplasmic reticulum membrane. The catalysed reaction is ATP(in) = ATP(out). The enzyme catalyses chloride(in) = chloride(out). It carries out the reaction iodide(out) = iodide(in). It catalyses the reaction Na(+)(in) = Na(+)(out). The catalysed reaction is D-gluconate(in) = D-gluconate(out). Ion channel with a slight anion preference. Also able to release ATP. Plays a role in regulating neurogenesis and apoptosis in keratinocytes. This Homo sapiens (Human) protein is Pannexin-2.